A 626-amino-acid chain; its full sequence is Putative folylpolyglutamate synthase (626 aa).

144 to 147 is a binding site for ATP; the sequence is GKGS. Mg(2+)-binding residues include S168, E235, and H263. The ATP site is built by R412 and D430.

The protein belongs to the folylpolyglutamate synthase family.

It carries out the reaction (6S)-5,6,7,8-tetrahydrofolyl-(gamma-L-Glu)(n) + L-glutamate + ATP = (6S)-5,6,7,8-tetrahydrofolyl-(gamma-L-Glu)(n+1) + ADP + phosphate + H(+). Its pathway is cofactor biosynthesis; tetrahydrofolylpolyglutamate biosynthesis. In terms of biological role, conversion of folates to polyglutamate derivatives. This chain is Putative folylpolyglutamate synthase (folC), found in Dictyostelium discoideum (Social amoeba).